Consider the following 167-residue polypeptide: Small ribosomal subunit protein uS5 (167 aa).

The region spanning 11–74 is the S5 DRBM domain; sequence LQEKLIAVNR…EKARRAMINV (64 aa).

Belongs to the universal ribosomal protein uS5 family. Part of the 30S ribosomal subunit. Contacts proteins S4 and S8.

With S4 and S12 plays an important role in translational accuracy. Its function is as follows. Located at the back of the 30S subunit body where it stabilizes the conformation of the head with respect to the body. The protein is Small ribosomal subunit protein uS5 of Serratia proteamaculans (strain 568).